Consider the following 495-residue polypeptide: Phenylalanine--tRNA ligase alpha subunit (495 aa).

Residues Thr-338, 377 to 379 (QLE), and Tyr-417 each bind L-phenylalanine. Glu-419 is a binding site for Mg(2+). An L-phenylalanine-binding site is contributed by Phe-442.

It belongs to the class-II aminoacyl-tRNA synthetase family. Phe-tRNA synthetase alpha subunit type 2 subfamily. In terms of assembly, tetramer of two alpha and two beta subunits. It depends on Mg(2+) as a cofactor.

The protein localises to the cytoplasm. The catalysed reaction is tRNA(Phe) + L-phenylalanine + ATP = L-phenylalanyl-tRNA(Phe) + AMP + diphosphate + H(+). In Methanosarcina mazei (strain ATCC BAA-159 / DSM 3647 / Goe1 / Go1 / JCM 11833 / OCM 88) (Methanosarcina frisia), this protein is Phenylalanine--tRNA ligase alpha subunit.